A 460-amino-acid chain; its full sequence is Putative RNA-guided DNA endonuclease MT2953 (460 aa).

Catalysis depends on residues Asp-224 and Glu-313. Residues Cys-372, Cys-375, Cys-389, and Cys-392 each contribute to the Zn(2+) site. Asp-399 is an active-site residue. Positions 415–460 (VVGPVGAAVKRGADRKTGPGPAGGREARKATGHPAGEQPRDGVQVK) are disordered.

The protein in the N-terminal section; belongs to the transposase 2 family. It in the C-terminal section; belongs to the transposase 35 family.

An RNA-guided dsDNA endonuclease. When guided by an RNA derived from the right-end element of its insertion sequence element (IS), cleaves DNA downstream of the transposon-associated motif (TAM). Cleaves supercoiled and linear DNA in a staggered manner 15-21 bases from the TAM yielding 5'-overhangs. Binds reRNA, an approximately 150 nucleotide base sRNA derived from the 3' end of its own gene, the right end (RE) of the insertion sequence (IS) plus sequence downstream of the IS. This Mycobacterium tuberculosis (strain CDC 1551 / Oshkosh) protein is Putative RNA-guided DNA endonuclease MT2953.